Consider the following 386-residue polypeptide: Acyl-lipid omega-3 desaturase (cytochrome b5), endoplasmic reticulum (386 aa).

The interval 1-30 is disordered; sequence MVVAMDQRTNVNGDPGAGDRKKEERFDPSA. The span at 17–27 shows a compositional bias: basic and acidic residues; that stretch reads AGDRKKEERFD. A helical membrane pass occupies residues 63–83; sequence IIAVAALAIAAVYVDSWFLWP. Positions 101-105 match the Histidine box-1 motif; the sequence is HDCGH. Positions 137-141 match the Histidine box-2 motif; it reads HRTHH. Helical transmembrane passes span 220-240 and 242-262; these read WSIMFVSLIALSFVFGPLAVL and VYGVPYIIFVMWLDAVTYLHH. The Histidine box-3 motif lies at 304–308; sequence HVIHH.

This sequence belongs to the fatty acid desaturase type 1 family. In terms of tissue distribution, abundant in leaves and seedlings. Barely detectable in root tissue.

Its subcellular location is the endoplasmic reticulum membrane. The catalysed reaction is a (9Z,12Z)-octadecadienoyl-containing glycerolipid + 2 Fe(II)-[cytochrome b5] + O2 + 2 H(+) = (9Z,12Z,15Z)-octadecatrienoyl-containing glycerolipid + 2 Fe(III)-[cytochrome b5] + 2 H2O. It participates in lipid metabolism; polyunsaturated fatty acid biosynthesis. Functionally, microsomal (ER) omega-3 fatty acid desaturase introduces the third double bond in the biosynthesis of 18:3 fatty acids, important constituents of plant membranes. It is thought to use cytochrome b5 as an electron donor and to act on fatty acids esterified to phosphatidylcholine and, possibly, other phospholipids. In Arabidopsis thaliana (Mouse-ear cress), this protein is Acyl-lipid omega-3 desaturase (cytochrome b5), endoplasmic reticulum.